A 143-amino-acid chain; its full sequence is Transcriptional regulator MraZ (143 aa).

SpoVT-AbrB domains follow at residues 5–47 (EYTH…PLIE) and 76–119 (ACEC…DAER).

This sequence belongs to the MraZ family. As to quaternary structure, forms oligomers.

It localises to the cytoplasm. Its subcellular location is the nucleoid. This Limosilactobacillus fermentum (strain NBRC 3956 / LMG 18251) (Lactobacillus fermentum) protein is Transcriptional regulator MraZ.